We begin with the raw amino-acid sequence, 276 residues long: Large ribosomal subunit protein uL2 (276 aa).

2 disordered regions span residues 1 to 20 (MGIK…TTND) and 219 to 276 (TVRG…RRKK). The span at 7 to 20 (NPTTNGRRNMTTND) shows a compositional bias: polar residues.

It belongs to the universal ribosomal protein uL2 family. Part of the 50S ribosomal subunit. Forms a bridge to the 30S subunit in the 70S ribosome.

Functionally, one of the primary rRNA binding proteins. Required for association of the 30S and 50S subunits to form the 70S ribosome, for tRNA binding and peptide bond formation. It has been suggested to have peptidyltransferase activity; this is somewhat controversial. Makes several contacts with the 16S rRNA in the 70S ribosome. This is Large ribosomal subunit protein uL2 from Bacillus cereus (strain G9842).